The primary structure comprises 333 residues: Phosphate acyltransferase (333 aa).

It belongs to the PlsX family. In terms of assembly, homodimer. Probably interacts with PlsY.

The protein resides in the cytoplasm. It catalyses the reaction a fatty acyl-[ACP] + phosphate = an acyl phosphate + holo-[ACP]. Its pathway is lipid metabolism; phospholipid metabolism. In terms of biological role, catalyzes the reversible formation of acyl-phosphate (acyl-PO(4)) from acyl-[acyl-carrier-protein] (acyl-ACP). This enzyme utilizes acyl-ACP as fatty acyl donor, but not acyl-CoA. This is Phosphate acyltransferase from Aliarcobacter butzleri (strain RM4018) (Arcobacter butzleri).